A 211-amino-acid chain; its full sequence is N-(5'-phosphoribosyl)anthranilate isomerase (211 aa).

This sequence belongs to the TrpF family.

It catalyses the reaction N-(5-phospho-beta-D-ribosyl)anthranilate = 1-(2-carboxyphenylamino)-1-deoxy-D-ribulose 5-phosphate. It participates in amino-acid biosynthesis; L-tryptophan biosynthesis; L-tryptophan from chorismate: step 3/5. In Desulfovibrio desulfuricans (strain ATCC 27774 / DSM 6949 / MB), this protein is N-(5'-phosphoribosyl)anthranilate isomerase.